The sequence spans 170 residues: Small ribosomal subunit protein uS4 (170 aa).

One can recognise an S4 RNA-binding domain in the interval 100–164 (RRLQTVVYRE…SDLTDELHPA (65 aa)).

The protein belongs to the universal ribosomal protein uS4 family. Part of the 30S ribosomal subunit. Contacts protein S5. The interaction surface between S4 and S5 is involved in control of translational fidelity.

One of the primary rRNA binding proteins, it binds directly to 16S rRNA where it nucleates assembly of the body of the 30S subunit. Functionally, with S5 and S12 plays an important role in translational accuracy. The protein is Small ribosomal subunit protein uS4 of Halobacterium salinarum (strain ATCC 29341 / DSM 671 / R1).